The chain runs to 382 residues: MKITRLTTYRLPPRWMFLKIETDEGVAGWGEPVIEGRARTVEAAVHELADYLVGQDPRRINDLWQTLYRGGFYRGGPILMSAIAGIDQALWDIKGKVLGVPVYELLGGLVRDRMRTYSWVGGDRPADVIAGMKALQAGGFDHFKLNGCEEMGIIDSARAVDAAVARVAEIRAAFGNTVEFGLDFHGRVSAPMAKVLIRALEPYRPLFIEEPVLAEQAESYARLAAQTHLPIAAGERMFSRFEFKRVLEAGGLAILQPDLSHAGGITECLKIAGMAEAYDVALAPHCPLGPIALAACLHIDFVSWNATLQEQSMGIHYNQGAELLDYVRNKADFALEGGYIRPPRLPGLGVDIDEALVIERSRSAPDWRNPVWRHADGSVAEW.

Asp-183 contacts Mg(2+). The active-site Proton donor is the His-185. Residues Glu-209 and Glu-235 each coordinate Mg(2+). The active-site Proton acceptor is the His-285.

The protein belongs to the mandelate racemase/muconate lactonizing enzyme family. GalD subfamily. The cofactor is Mg(2+).

It catalyses the reaction D-galactonate = 2-dehydro-3-deoxy-D-galactonate + H2O. It functions in the pathway carbohydrate acid metabolism; D-galactonate degradation; D-glyceraldehyde 3-phosphate and pyruvate from D-galactonate: step 1/3. Catalyzes the dehydration of D-galactonate to 2-keto-3-deoxy-D-galactonate. The sequence is that of D-galactonate dehydratase from Ralstonia nicotianae (strain ATCC BAA-1114 / GMI1000) (Ralstonia solanacearum).